A 358-amino-acid chain; its full sequence is MERFQGHINPCFFDRKPDVRSLEVQGFAEAQSFAFKEKEEESLQDTVPFLQMLQSEDPSSFFSIKEPNFLTLLSLQTLKEPWELERYLSLEDSQFHSPVQSETNRFMEGANQAVSSQEIPFSQANMTLPSSTSSPLSAHSRRKRKINHLLPQEMTREKRKRRKTKPSKNNEEIENQRINHIAVERNRRRQMNEHINSLRALLPPSYIQRGDQASIVGGAINYVKVLEQIIQSLESQKRTQQQSNSEVVENALNHLSGISSNDLWTTLEDQTCIPKIEATVIQNHVSLKVQCEKKQGQLLKGIISLEKLKLTVLHLNITTSSHSSVSYSFNLKMEDECDLESADEITAAVHRIFDIPTI.

The segment at 125 to 176 is disordered; the sequence is NMTLPSSTSSPLSAHSRRKRKINHLLPQEMTREKRKRRKTKPSKNNEEIENQ. The span at 127-137 shows a compositional bias: low complexity; that stretch reads TLPSSTSSPLS. Residues 157-166 are compositionally biased toward basic residues; sequence EKRKRRKTKP. The region spanning 175–226 is the bHLH domain; it reads NQRINHIAVERNRRRQMNEHINSLRALLPPSYIQRGDQASIVGGAINYVKVL.

In terms of assembly, homodimer. In terms of tissue distribution, expressed constitutively in roots, leaves, stems, and flowers.

The protein localises to the nucleus. In Arabidopsis thaliana (Mouse-ear cress), this protein is Transcription factor bHLH67 (BHLH67).